A 429-amino-acid chain; its full sequence is Putative zinc metalloprotease aq_1964 (429 aa).

His-17 is a Zn(2+) binding site. Glu-18 is a catalytic residue. A Zn(2+)-binding site is contributed by His-21. A helical transmembrane segment spans residues 88–110; sequence ILIALGGPLFNFLFTILVFALVY. A PDZ domain is found at 189–265; that stretch reads TIKVPNVQKG…AIKLKILRNG (77 aa). Helical transmembrane passes span 369–391 and 406–428; these read IFNL…IEWL and RVGL…LRLL.

The protein belongs to the peptidase M50B family. Requires Zn(2+) as cofactor.

The protein localises to the cell inner membrane. This Aquifex aeolicus (strain VF5) protein is Putative zinc metalloprotease aq_1964.